A 347-amino-acid chain; its full sequence is S-adenosylmethionine:tRNA ribosyltransferase-isomerase (347 aa).

Belongs to the QueA family. As to quaternary structure, monomer.

The protein resides in the cytoplasm. It carries out the reaction 7-aminomethyl-7-carbaguanosine(34) in tRNA + S-adenosyl-L-methionine = epoxyqueuosine(34) in tRNA + adenine + L-methionine + 2 H(+). It functions in the pathway tRNA modification; tRNA-queuosine biosynthesis. Transfers and isomerizes the ribose moiety from AdoMet to the 7-aminomethyl group of 7-deazaguanine (preQ1-tRNA) to give epoxyqueuosine (oQ-tRNA). The polypeptide is S-adenosylmethionine:tRNA ribosyltransferase-isomerase (Streptococcus thermophilus (strain ATCC BAA-491 / LMD-9)).